We begin with the raw amino-acid sequence, 428 residues long: Enolase (428 aa).

Residue Q163 participates in (2R)-2-phosphoglycerate binding. The active-site Proton donor is E205. Mg(2+)-binding residues include D242, E285, and D312. (2R)-2-phosphoglycerate-binding residues include K337, R366, S367, and K388. K337 functions as the Proton acceptor in the catalytic mechanism.

This sequence belongs to the enolase family. It depends on Mg(2+) as a cofactor.

It is found in the cytoplasm. The protein resides in the secreted. It localises to the cell surface. The enzyme catalyses (2R)-2-phosphoglycerate = phosphoenolpyruvate + H2O. Its pathway is carbohydrate degradation; glycolysis; pyruvate from D-glyceraldehyde 3-phosphate: step 4/5. Its function is as follows. Catalyzes the reversible conversion of 2-phosphoglycerate (2-PG) into phosphoenolpyruvate (PEP). It is essential for the degradation of carbohydrates via glycolysis. The polypeptide is Enolase (Neisseria gonorrhoeae (strain ATCC 700825 / FA 1090)).